Consider the following 379-residue polypeptide: Cytochrome-c peroxidase IdrP1 (379 aa).

Positions 1–24 are cleaved as a signal peptide; sequence MNNRKPLQLSLLVASLAVAFTASA. 2 consecutive Cytochrome c domains span residues 50 to 158 and 204 to 355; these read EKIA…DAFK and TSQK…EALS. Cysteine 72, cysteine 75, histidine 76, cysteine 219, cysteine 222, and histidine 223 together coordinate heme c.

The iodate reductase (Idr) complex is composed of a molybdopterin-dependent iodate reductase (IdrA and IdrB subunits) and two associated peroxidases (IdrP1 and IdrP2). It depends on heme c as a cofactor.

The protein resides in the periplasm. The enzyme catalyses 2 Fe(II)-[cytochrome c] + H2O2 + 2 H(+) = 2 Fe(III)-[cytochrome c] + 2 H2O. Functionally, involved in iodate respiration. Probably reduces the H(2)O(2) produced by IdrA/IdrB to H(2)O, using a reduced cytochrome c as the electron donor. In Pseudomonas sp. (strain SCT), this protein is Cytochrome-c peroxidase IdrP1.